The primary structure comprises 377 residues: UPF0754 membrane protein lmo2224 (377 aa).

2 helical membrane passes run 1 to 21 (MSVLFTILLMAVIGGFIGAMT) and 357 to 377 (YLGGILGGFIGIIQGILAMWI).

Belongs to the UPF0754 family.

It is found in the cell membrane. The sequence is that of UPF0754 membrane protein lmo2224 from Listeria monocytogenes serovar 1/2a (strain ATCC BAA-679 / EGD-e).